A 338-amino-acid polypeptide reads, in one-letter code: Anthranilate phosphoribosyltransferase (338 aa).

5-phospho-alpha-D-ribose 1-diphosphate-binding positions include Gly-78, 81-82, Thr-86, 88-91, 106-114, and Ser-118; these read GD, NIST, and KHGNRSVSS. Gly-78 contacts anthranilate. Ser-90 provides a ligand contact to Mg(2+). Position 109 (Asn-109) interacts with anthranilate. Arg-164 is an anthranilate binding site. Asp-223 and Glu-224 together coordinate Mg(2+).

Belongs to the anthranilate phosphoribosyltransferase family. As to quaternary structure, homodimer. The cofactor is Mg(2+).

It catalyses the reaction N-(5-phospho-beta-D-ribosyl)anthranilate + diphosphate = 5-phospho-alpha-D-ribose 1-diphosphate + anthranilate. It participates in amino-acid biosynthesis; L-tryptophan biosynthesis; L-tryptophan from chorismate: step 2/5. In terms of biological role, catalyzes the transfer of the phosphoribosyl group of 5-phosphorylribose-1-pyrophosphate (PRPP) to anthranilate to yield N-(5'-phosphoribosyl)-anthranilate (PRA). This is Anthranilate phosphoribosyltransferase from Bacillus licheniformis (strain ATCC 14580 / DSM 13 / JCM 2505 / CCUG 7422 / NBRC 12200 / NCIMB 9375 / NCTC 10341 / NRRL NRS-1264 / Gibson 46).